We begin with the raw amino-acid sequence, 500 residues long: L-arabinose isomerase (500 aa).

Mn(2+)-binding residues include glutamate 306, glutamate 333, histidine 350, and histidine 450.

It belongs to the arabinose isomerase family. Homohexamer. Mn(2+) is required as a cofactor.

It carries out the reaction beta-L-arabinopyranose = L-ribulose. It functions in the pathway carbohydrate degradation; L-arabinose degradation via L-ribulose; D-xylulose 5-phosphate from L-arabinose (bacterial route): step 1/3. Its function is as follows. Catalyzes the conversion of L-arabinose to L-ribulose. In Escherichia coli O139:H28 (strain E24377A / ETEC), this protein is L-arabinose isomerase.